The primary structure comprises 130 residues: Guanyl-specific ribonuclease T1 (130 aa).

The N-terminal stretch at 1-26 (MMYSKLLTLTTLLLPTALALPSLVER) is a signal peptide. 2 disulfides stabilise this stretch: C28–C36 and C32–C129. The active site involves H66. The active-site Proton acceptor is E84. Residue H118 is the Proton donor of the active site.

Belongs to the ribonuclease N1/T1 family. As to quaternary structure, monomer.

It carries out the reaction [RNA] containing guanosine + H2O = an [RNA fragment]-3'-guanosine-3'-phosphate + a 5'-hydroxy-ribonucleotide-3'-[RNA fragment].. In Aspergillus oryzae (strain ATCC 42149 / RIB 40) (Yellow koji mold), this protein is Guanyl-specific ribonuclease T1 (rntA).